The sequence spans 578 residues: Proline--tRNA ligase (578 aa).

Belongs to the class-II aminoacyl-tRNA synthetase family. ProS type 1 subfamily. Homodimer.

It localises to the cytoplasm. It catalyses the reaction tRNA(Pro) + L-proline + ATP = L-prolyl-tRNA(Pro) + AMP + diphosphate. Catalyzes the attachment of proline to tRNA(Pro) in a two-step reaction: proline is first activated by ATP to form Pro-AMP and then transferred to the acceptor end of tRNA(Pro). As ProRS can inadvertently accommodate and process non-cognate amino acids such as alanine and cysteine, to avoid such errors it has two additional distinct editing activities against alanine. One activity is designated as 'pretransfer' editing and involves the tRNA(Pro)-independent hydrolysis of activated Ala-AMP. The other activity is designated 'posttransfer' editing and involves deacylation of mischarged Ala-tRNA(Pro). The misacylated Cys-tRNA(Pro) is not edited by ProRS. The chain is Proline--tRNA ligase from Burkholderia mallei (strain ATCC 23344).